Consider the following 179-residue polypeptide: uncharacterized protein (179 aa).

This is an uncharacterized protein from Galliformes (FAdV-1).